The following is a 298-amino-acid chain: GTP cyclohydrolase FolE2 (298 aa).

This sequence belongs to the GTP cyclohydrolase IV family.

It carries out the reaction GTP + H2O = 7,8-dihydroneopterin 3'-triphosphate + formate + H(+). It participates in cofactor biosynthesis; 7,8-dihydroneopterin triphosphate biosynthesis; 7,8-dihydroneopterin triphosphate from GTP: step 1/1. Its function is as follows. Converts GTP to 7,8-dihydroneopterin triphosphate. This chain is GTP cyclohydrolase FolE2, found in Pseudomonas aeruginosa (strain LESB58).